The sequence spans 244 residues: Probable cytokinin riboside 5'-monophosphate phosphoribohydrolase LOGL2 (244 aa).

Substrate contacts are provided by residues Glu-91, 109–110 (RK), and 126–132 (GYGTLEE).

This sequence belongs to the LOG family.

It catalyses the reaction N(6)-(dimethylallyl)adenosine 5'-phosphate + H2O = N(6)-dimethylallyladenine + D-ribose 5-phosphate. The catalysed reaction is 9-ribosyl-trans-zeatin 5'-phosphate + H2O = trans-zeatin + D-ribose 5-phosphate. In terms of biological role, cytokinin-activating enzyme working in the direct activation pathway. Phosphoribohydrolase that converts inactive cytokinin nucleotides to the biologically active free-base forms. This is Probable cytokinin riboside 5'-monophosphate phosphoribohydrolase LOGL2 (LOGL2) from Oryza sativa subsp. japonica (Rice).